Consider the following 90-residue polypeptide: Small ribosomal subunit protein uS15c (90 aa).

The protein belongs to the universal ribosomal protein uS15 family. In terms of assembly, part of the 30S ribosomal subunit.

Its subcellular location is the plastid. It localises to the chloroplast. In Phaseolus vulgaris (Kidney bean), this protein is Small ribosomal subunit protein uS15c (rps15).